The chain runs to 1692 residues: Flagellar attachment zone protein 1 (1692 aa).

Coiled-coil stretches lie at residues 613 to 657 (REQE…KLQK), 684 to 864 (VTLD…HKVR), and 903 to 1607 (NDHM…SALE). Tandem repeats lie at residues 1012-1025 (EELE…EKLA), 1026-1039 (EELE…EKLA), 1040-1053 (EELE…EKLA), 1054-1067 (EELE…EKLA), 1068-1081 (EELE…EKLA), 1082-1095 (EELE…EKLA), 1096-1109 (EELE…EKLA), 1110-1123 (EELE…EKLA), 1124-1137 (EELE…EKLA), 1138-1151 (EELE…EKLA), 1152-1165 (EELE…EKLA), 1166-1179 (EELE…EKLA), 1180-1193 (EELE…EKLA), 1194-1207 (EELE…EKLA), 1208-1221 (EELE…EKLA), 1222-1235 (EELE…EKLA), 1236-1249 (EELE…EKLA), 1250-1263 (EELE…EKLA), 1264-1277 (EELE…EKLA), 1278-1291 (EELE…EKLA), 1292-1305 (EELE…EKLA), 1306-1319 (EELE…EKLA), 1320-1333 (EELE…EKLA), 1334-1347 (EELE…EKLA), 1348-1361 (EELE…EKLA), 1362-1375 (EELE…EKLA), 1376-1389 (EELE…EKLA), 1390-1403 (EELE…EKLA), 1404-1417 (EELE…EKLA), 1418-1431 (EELE…EKLA), 1432-1445 (EELE…EKLA), 1446-1459 (EELE…EKLA), 1460-1473 (EELE…EKLA), 1474-1487 (EELE…EKLA), 1488-1501 (EELE…EKLA), 1502-1515 (EELE…EKLA), and 1516-1529 (EELE…KRLA). Residues 1012–1529 (EELELKAAEN…LKVAENKRLA (518 aa)) are 37 X 14 AA tandem repeats of E-E-L-E-L-K-[VA]-A-E-N-E-K-L-A.

The protein localises to the cell projection. It localises to the cilium. Its subcellular location is the flagellum. A component of FAZ filament that is required for correct FAZ assembly and attachment. Not essential for new flagellum growth. This Trypanosoma brucei brucei (strain 927/4 GUTat10.1) protein is Flagellar attachment zone protein 1.